Consider the following 400-residue polypeptide: tRNA-specific 2-thiouridylase MnmA (400 aa).

Residues 19–26 (AMSGGVDS) and L45 contribute to the ATP site. The active-site Nucleophile is the C113. Cysteines 113 and 210 form a disulfide. G137 provides a ligand contact to ATP. An interaction with tRNA region spans residues 160-162 (RDQ). C210 acts as the Cysteine persulfide intermediate in catalysis.

The protein belongs to the MnmA/TRMU family.

The protein localises to the cytoplasm. It catalyses the reaction S-sulfanyl-L-cysteinyl-[protein] + uridine(34) in tRNA + AH2 + ATP = 2-thiouridine(34) in tRNA + L-cysteinyl-[protein] + A + AMP + diphosphate + H(+). Its function is as follows. Catalyzes the 2-thiolation of uridine at the wobble position (U34) of tRNA, leading to the formation of s(2)U34. This is tRNA-specific 2-thiouridylase MnmA from Nitrobacter winogradskyi (strain ATCC 25391 / DSM 10237 / CIP 104748 / NCIMB 11846 / Nb-255).